The following is a 568-amino-acid chain: Periplasmic pectate lyase (568 aa).

An N-terminal signal peptide occupies residues 1-19 (MKRFALSLLAGLVALQASA).

The protein belongs to the polysaccharide lyase 2 family.

Its subcellular location is the periplasm. The catalysed reaction is Eliminative cleavage of (1-&gt;4)-alpha-D-galacturonan to give oligosaccharides with 4-deoxy-alpha-D-galact-4-enuronosyl groups at their non-reducing ends.. Its pathway is glycan metabolism; pectin degradation; 2-dehydro-3-deoxy-D-gluconate from pectin: step 2/5. The chain is Periplasmic pectate lyase (pelB) from Pectobacterium carotovorum subsp. carotovorum (Erwinia carotovora subsp. carotovora).